We begin with the raw amino-acid sequence, 99 residues long: U1-theraphotoxin-Lsp1b (99 aa).

The first 23 residues, 1 to 23 (MRSLTLAALLLCSLLLVFHTSAA), serve as a signal peptide directing secretion. A propeptide spanning residues 24 to 50 (EELQAQEGHLMIPGDTDTALETVDDER) is cleaved from the precursor. 4 disulfide bridges follow: cysteine 54–cysteine 67, cysteine 58–cysteine 91, cysteine 72–cysteine 74, and cysteine 85–cysteine 96.

The protein belongs to the neurotoxin 12 (Hwtx-2) family. 04 (lasiotoxin) subfamily. As to expression, expressed by the venom gland.

It localises to the secreted. Its function is as follows. Toxin that causes irreversible contractile paralysis into adult Aedes aegypti resulting in 100% mortality after 24 hours. In Lasiodora sp. (strain IBSP 8539) (Brazilian salmon pink birdeater), this protein is U1-theraphotoxin-Lsp1b.